A 946-amino-acid polypeptide reads, in one-letter code: Increased sodium tolerance protein 2 (946 aa).

The Cytoplasmic segment spans residues 1–121 (MSQTITSLDP…SNLTNNPKQS (121 aa)). Residues 122-142 (LYFAFLQNYIKWLIPFSFFGL) traverse the membrane as a helical segment. The Extracellular segment spans residues 143-153 (SIRFLSNFTYE). A helical membrane pass occupies residues 154-174 (FNSTYSLFAILWTLSFTAFWL). The Cytoplasmic portion of the chain corresponds to 175 to 217 (YKYEPFWSDRLSKYSSFSTIEFLQDKQKAQKKASSVIMLKKCC). Residues 218 to 238 (FIPVALLFGAILLSFQLYCFA) traverse the membrane as a helical segment. At 239-253 (LEIFIKQIYNGPMIS) the chain is on the extracellular side. A helical transmembrane segment spans residues 254-274 (ILSFLPTILICTFTPVLTVIY). At 275-302 (NKYFVEPMTKWENHSSVVNAKKSKEAKN) the chain is on the cytoplasmic side. The helical transmembrane segment at 303–323 (FVIIFLSSYVPLLITLFLYLP) threads the bilayer. The Extracellular segment spans residues 324–447 (MGHLLTAEIR…DANFKKLLLQ (124 aa)). A helical membrane pass occupies residues 448-468 (FGYLVMFSTIWPLAPFICLIV). The Cytoplasmic portion of the chain corresponds to 469 to 505 (NLIVYQVDLRKAVLYSKPEYFPFPIYDKPSSVSNTQK). A helical transmembrane segment spans residues 506 to 526 (LTVGLWNSVLVMFSILGCVIT). The Extracellular portion of the chain corresponds to 527-563 (ATLTYMYQSCNIPGVGAHTSIHTNKAWYLANPINHSW). Residues 564 to 584 (INIVLYAVFIEHVSVAIFFLF) form a helical membrane-spanning segment. Residues 585 to 946 (SSILKSSHDD…GLLHKLKKKL (362 aa)) are Cytoplasmic-facing. Disordered regions lie at residues 617-638 (EKIP…RKGS) and 665-718 (THAN…TEKR). Over residues 628-638 (NEKELVQRKGS) the composition is skewed to basic and acidic residues. The residue at position 638 (Ser638) is a Phosphoserine. Residues 671-689 (PSSLSSASSPSLSSSSSSS) show a composition bias toward low complexity. Residue Thr701 is modified to Phosphothreonine. Phosphoserine is present on residues Ser704 and Ser720. Thr726 is modified (phosphothreonine). Ser729 carries the post-translational modification Phosphoserine. Phosphotyrosine is present on Tyr730. Position 757 is a phosphoserine (Ser757). Positions 759–784 (RDAKSSAESSNATNNNTLGTESKLLP) are disordered. Over residues 764–775 (SAESSNATNNNT) the composition is skewed to low complexity. Ser793, Ser844, and Ser847 each carry phosphoserine. Residues 846 to 946 (VSVATEQTKK…GLLHKLKKKL (101 aa)) form a disordered region. Residue Thr850 is modified to Phosphothreonine. Residues 859–868 (STKNGPSRSI) are compositionally biased toward polar residues. The span at 884 to 893 (TTTTTTTDAT) shows a compositional bias: low complexity. A compositionally biased stretch (basic residues) spans 895 to 905 (PHHHHHHHRHR). Residues 916–927 (SKTTESSSSSSA) are compositionally biased toward low complexity. Basic residues predominate over residues 931 to 946 (KPKHKKGLLHKLKKKL).

In terms of assembly, interacts with BTN2.

The protein localises to the cell membrane. Its function is as follows. May be involved in ion homeostasis together with BTN1 or BTN2. The polypeptide is Increased sodium tolerance protein 2 (IST2) (Saccharomyces cerevisiae (strain ATCC 204508 / S288c) (Baker's yeast)).